The primary structure comprises 77 residues: Cold shock protein YdfK (77 aa).

The protein to E.coli YnaE.

In Escherichia coli (strain K12), this protein is Cold shock protein YdfK (ydfK).